We begin with the raw amino-acid sequence, 332 residues long: GTP 3',8-cyclase (332 aa).

Residues 9–220 form the Radical SAM core domain; it reads RFARKVDYLR…DQVRERIAER (212 aa). Arg-18 lines the GTP pocket. Residues Cys-25 and Cys-29 each contribute to the [4Fe-4S] cluster site. Tyr-31 provides a ligand contact to S-adenosyl-L-methionine. Cys-32 is a binding site for [4Fe-4S] cluster. Arg-67 contributes to the GTP binding site. An S-adenosyl-L-methionine-binding site is contributed by Gly-71. Residue Thr-98 participates in GTP binding. Ser-122 serves as a coordination point for S-adenosyl-L-methionine. Position 159 (Lys-159) interacts with GTP. An S-adenosyl-L-methionine-binding site is contributed by Met-193. Positions 258 and 261 each coordinate [4Fe-4S] cluster. 263–265 is a GTP binding site; the sequence is RVR. Cys-275 serves as a coordination point for [4Fe-4S] cluster.

This sequence belongs to the radical SAM superfamily. MoaA family. As to quaternary structure, monomer and homodimer. Requires [4Fe-4S] cluster as cofactor.

The catalysed reaction is GTP + AH2 + S-adenosyl-L-methionine = (8S)-3',8-cyclo-7,8-dihydroguanosine 5'-triphosphate + 5'-deoxyadenosine + L-methionine + A + H(+). It participates in cofactor biosynthesis; molybdopterin biosynthesis. Its function is as follows. Catalyzes the cyclization of GTP to (8S)-3',8-cyclo-7,8-dihydroguanosine 5'-triphosphate. The protein is GTP 3',8-cyclase of Pseudomonas syringae pv. syringae (strain B728a).